We begin with the raw amino-acid sequence, 302 residues long: Oxygen-dependent coproporphyrinogen-III oxidase (302 aa).

Ser94 is a substrate binding site. Residues His98 and His108 each coordinate a divalent metal cation. Residue His108 is the Proton donor of the active site. Position 110–112 (Asn110–Arg112) interacts with substrate. Positions 147 and 177 each coordinate a divalent metal cation. An important for dimerization region spans residues Tyr242 to Arg277. Gly260–Arg262 is a binding site for substrate.

Belongs to the aerobic coproporphyrinogen-III oxidase family. As to quaternary structure, homodimer. The cofactor is a divalent metal cation.

The protein localises to the cytoplasm. It carries out the reaction coproporphyrinogen III + O2 + 2 H(+) = protoporphyrinogen IX + 2 CO2 + 2 H2O. The protein operates within porphyrin-containing compound metabolism; protoporphyrin-IX biosynthesis; protoporphyrinogen-IX from coproporphyrinogen-III (O2 route): step 1/1. Its function is as follows. Involved in the heme biosynthesis. Catalyzes the aerobic oxidative decarboxylation of propionate groups of rings A and B of coproporphyrinogen-III to yield the vinyl groups in protoporphyrinogen-IX. This chain is Oxygen-dependent coproporphyrinogen-III oxidase, found in Ralstonia pickettii (strain 12J).